The primary structure comprises 363 residues: Chorismate synthase (363 aa).

NADP(+)-binding residues include Arg48 and Arg54. Residues 125 to 127, 237 to 238, Gly277, 292 to 296, and Arg318 contribute to the FMN site; these read RSS, NA, and KPTSS.

It belongs to the chorismate synthase family. Homotetramer. It depends on FMNH2 as a cofactor.

It catalyses the reaction 5-O-(1-carboxyvinyl)-3-phosphoshikimate = chorismate + phosphate. The protein operates within metabolic intermediate biosynthesis; chorismate biosynthesis; chorismate from D-erythrose 4-phosphate and phosphoenolpyruvate: step 7/7. Its function is as follows. Catalyzes the anti-1,4-elimination of the C-3 phosphate and the C-6 proR hydrogen from 5-enolpyruvylshikimate-3-phosphate (EPSP) to yield chorismate, which is the branch point compound that serves as the starting substrate for the three terminal pathways of aromatic amino acid biosynthesis. This reaction introduces a second double bond into the aromatic ring system. This is Chorismate synthase from Pseudomonas paraeruginosa (strain DSM 24068 / PA7) (Pseudomonas aeruginosa (strain PA7)).